A 61-amino-acid chain; its full sequence is Metallothionein-2 (61 aa).

N-acetylmethionine is present on M1. The interval 1 to 29 (MDPNCSCATDGSCSCAGSCKCKQCKCTSC) is beta. A divalent metal cation-binding residues include C5, C7, C13, C15, C19, C21, C24, C26, C29, C33, C34, C36, C37, C41, C44, C48, C50, and C57. Positions 30 to 61 (KKSCCSCCPVGCAKCSQGCICKEASDKCSCCA) are alpha. S58 carries the phosphoserine modification. Residues C59 and C60 each coordinate a divalent metal cation.

It belongs to the metallothionein superfamily. Type 1 family.

Its function is as follows. Metallothioneins have a high content of cysteine residues that bind various heavy metals; these proteins are transcriptionally regulated by both heavy metals and glucocorticoids. The sequence is that of Metallothionein-2 (Mt2) from Rattus norvegicus (Rat).